We begin with the raw amino-acid sequence, 273 residues long: Phosphatidylglycerol--prolipoprotein diacylglyceryl transferase (273 aa).

A run of 4 helical transmembrane segments spans residues 18–38 (IPVR…YVVG), 47–67 (LPED…IICA), 89–109 (IWNG…TAYI), and 116–136 (VSFL…QIIG). R137 provides a ligand contact to a 1,2-diacyl-sn-glycero-3-phospho-(1'-sn-glycerol). Transmembrane regions (helical) follow at residues 178 to 198 (VHPT…ILLI), 207 to 227 (GEIF…IEGM), and 238 to 258 (LRSA…AIIY).

Belongs to the Lgt family.

It is found in the cell membrane. The catalysed reaction is L-cysteinyl-[prolipoprotein] + a 1,2-diacyl-sn-glycero-3-phospho-(1'-sn-glycerol) = an S-1,2-diacyl-sn-glyceryl-L-cysteinyl-[prolipoprotein] + sn-glycerol 1-phosphate + H(+). It functions in the pathway protein modification; lipoprotein biosynthesis (diacylglyceryl transfer). Its function is as follows. Catalyzes the transfer of the diacylglyceryl group from phosphatidylglycerol to the sulfhydryl group of the N-terminal cysteine of a prolipoprotein, the first step in the formation of mature lipoproteins. This Lysinibacillus sphaericus (strain C3-41) protein is Phosphatidylglycerol--prolipoprotein diacylglyceryl transferase.